The primary structure comprises 521 residues: U4/U6 small nuclear ribonucleoprotein Prp4 (521 aa).

K26 is subject to N6-acetyllysine. 7 WD repeats span residues 228–267 (GDDR…LLHT), 270–317 (GHNT…PVAD), 320–359 (GHTV…EILH), 362–401 (GHSM…CIMF), 404–443 (GHLK…CVYT), 446–486 (AHQN…PLKT), and 489–521 (GHEG…WMAE).

As to quaternary structure, component of the precatalytic spliceosome (spliceosome B complex). Component of the U4/U6-U5 tri-snRNP complex, a building block of the precatalytic spliceosome (spliceosome B complex). The U4/U6-U5 tri-snRNP complex is composed of the U4, U6 and U5 snRNAs and at least PRPF3, PRPF4, PRPF6, PRPF8, PRPF31, SNRNP200, TXNL4A, SNRNP40, SNRPB, SNRPD1, SNRPD2, SNRPD3, SNRPE, SNRPF, SNRPG, DDX23, CD2BP2, PPIH, SNU13, EFTUD2, SART1 and USP39, plus LSM2, LSM3, LSM4, LSM5, LSM6, LSM7 and LSM8. Interacts directly with PRPF18, PPIH and PRPF3. Part of a heteromeric complex containing PPIH, PRPF3 and PRPF4 that is stable in the absence of RNA. Interacts with ERCC6.

The protein resides in the nucleus. It is found in the nucleus speckle. Plays a role in pre-mRNA splicing as component of the U4/U6-U5 tri-snRNP complex that is involved in spliceosome assembly, and as component of the precatalytic spliceosome (spliceosome B complex). This is U4/U6 small nuclear ribonucleoprotein Prp4 (PRPF4) from Pongo abelii (Sumatran orangutan).